The following is a 458-amino-acid chain: Phosphoglucosamine mutase (458 aa).

Residue Ser-106 is the Phosphoserine intermediate of the active site. Mg(2+) contacts are provided by Ser-106, Asp-247, Asp-249, and Asp-251. At Ser-106 the chain carries Phosphoserine.

Belongs to the phosphohexose mutase family. Requires Mg(2+) as cofactor. Activated by phosphorylation.

It carries out the reaction alpha-D-glucosamine 1-phosphate = D-glucosamine 6-phosphate. Functionally, catalyzes the conversion of glucosamine-6-phosphate to glucosamine-1-phosphate. This Chlamydia caviae (strain ATCC VR-813 / DSM 19441 / 03DC25 / GPIC) (Chlamydophila caviae) protein is Phosphoglucosamine mutase.